A 175-amino-acid polypeptide reads, in one-letter code: Large ribosomal subunit protein uL15 (175 aa).

Disordered regions lie at residues Met1–Phe65 and Pro155–Ala175. Over residues Arg12 to Gly21 the composition is skewed to basic residues. A compositionally biased stretch (gly residues) spans Arg22–Gly38. Residues Lys160–Ala169 show a composition bias toward low complexity.

The protein belongs to the universal ribosomal protein uL15 family. As to quaternary structure, part of the 50S ribosomal subunit.

Functionally, binds to the 23S rRNA. The protein is Large ribosomal subunit protein uL15 of Myxococcus xanthus (strain DK1622).